The following is an 85-amino-acid chain: U4-theraphotoxin-Hhn1a (85 aa).

Residues 1–22 (MKVTLIAILTCAAVLVLHTTAE) form the signal peptide. Residues 23–48 (EELEAESQLMEVGMPDTELAAVDEER) constitute a propeptide that is removed on maturation. Disulfide bonds link Cys-52–Cys-66, Cys-56–Cys-77, and Cys-71–Cys-82.

Belongs to the neurotoxin 12 (Hwtx-2) family. 02 (Hwtx-2) subfamily. In terms of assembly, monomer. In terms of tissue distribution, expressed by the venom gland.

It is found in the secreted. Neurotoxin active on both insects and mammals. The polypeptide is U4-theraphotoxin-Hhn1a (Cyriopagopus hainanus (Chinese bird spider)).